The chain runs to 63 residues: Eumenitin VP1 (63 aa).

A signal peptide spans 1–22; sequence MRGTSFILFAVVVILGFLHANA. AXPX repeat units lie at residues 22 to 25, 26 to 29, 32 to 35, 40 to 43, and 44 to 47; these read AEPL, ANPA, ANPD, ADPL, and ADPE. Residues 23–48 constitute a propeptide that is removed on maturation; it reads EPLANPAPLANPDPLANADPLADPEA.

In terms of tissue distribution, expressed by the venom gland.

Its subcellular location is the secreted. The protein localises to the target cell membrane. Functionally, antimicrobial peptide with activities against the fungi B.cinerea (MIC=5 uM) and C.albicans (MIC=100 uM), the Gram-negative bacterium E.coli (MIC=25 uM) and the Gram-positive bacterium S.aureus (MIC=100 uM). Shows cytolytic activity against insect cell lines. Has no hemolytic activity against human erythrocytes. In vivo, peptide injection in the vicinity of the head and thorax of lepidopteran larvae induces feeding disorder followed by death due to starvation. This Eumenes pomiformis (Potter wasp) protein is Eumenitin VP1.